The sequence spans 541 residues: Eukaryotic translation initiation factor 3 subunit E (541 aa).

The 192-residue stretch at Val-252–Pro-443 folds into the PCI domain. The disordered stretch occupies residues Ala-466–Asn-541. Residues Asn-490–Asn-502 are compositionally biased toward gly residues. Positions Gln-506 to Glu-522 are enriched in basic and acidic residues. The segment covering Ser-523–Asn-541 has biased composition (low complexity).

Belongs to the eIF-3 subunit E family. Component of the eukaryotic translation initiation factor 3 (eIF-3) complex.

It localises to the cytoplasm. Functionally, component of the eukaryotic translation initiation factor 3 (eIF-3) complex, which is involved in protein synthesis of a specialized repertoire of mRNAs and, together with other initiation factors, stimulates binding of mRNA and methionyl-tRNAi to the 40S ribosome. The eIF-3 complex specifically targets and initiates translation of a subset of mRNAs involved in cell proliferation. The chain is Eukaryotic translation initiation factor 3 subunit E from Mycosarcoma maydis (Corn smut fungus).